Consider the following 71-residue polypeptide: IRCFITPDITSKDCPNGHVCYTKTWCDGFCSRRGERVDLGCAATCPTVKTGVDIQCCSTDDCDPFPTRKRP.

Intrachain disulfides connect C3/C20, C14/C41, C26/C30, C45/C56, and C57/C62.

Belongs to the three-finger toxin family. Long-chain subfamily. Type II alpha-neurotoxin sub-subfamily. In terms of tissue distribution, expressed by the venom gland.

The protein localises to the secreted. Functionally, binds with high affinity to muscular (alpha-1/CHRNA1) and neuronal (alpha-7/CHRNA7) nicotinic acetylcholine receptor (nAChR) and inhibits acetylcholine from binding to the receptor, thereby impairing neuromuscular and neuronal transmission. This Naja naja (Indian cobra) protein is Long neurotoxin 5.